A 294-amino-acid polypeptide reads, in one-letter code: Acetaldehyde dehydrogenase (294 aa).

11–14 is an NAD(+) binding site; sequence SGNI. The Acyl-thioester intermediate role is filled by Cys-126. NAD(+) contacts are provided by residues 157–165 and Asn-269; that span reads SAGPGTRAN.

Belongs to the acetaldehyde dehydrogenase family.

It catalyses the reaction acetaldehyde + NAD(+) + CoA = acetyl-CoA + NADH + H(+). The sequence is that of Acetaldehyde dehydrogenase (pheF) from Geobacillus stearothermophilus (Bacillus stearothermophilus).